The following is a 366-amino-acid chain: MVKTFDIVVFPGDYGGPEVLGEIQSQYEQEVTFNLKYHLLGGASFDAHGTPIADEALTDAKAASAVLLGAVGGPAWDKAPIPVESGLGRLRKALDAFGNLRPVKFIHPILTETSALKEQVCRGADLLIIRELTGGIYYGARQEHDGTLNAASDLDHYERAQVQRVARLAGTLAMSTQPPTPITSLDKANLLAACGRLWRGVVEETIRREFPDVELKHMLIDTAAMTLGCRPTKLNGIVLTSNMFGDIISDQASAIPGSLGLLPSASLCAIPGGESGGCVHGIYEPVHGSAPDIAGQGIINPTGMILSVAMMLRYSLDMPAAATAVETAVSRVIERGGRTRDVGGTTSTAEFGDQVVACLRENTEDK.

71-73 contacts NADP(+); the sequence is VGG. Residues R91 and R130 each contribute to the substrate site. Residues D221, D246, and D250 each coordinate Mg(2+). 277-282 contacts NADP(+); the sequence is GCVHGI.

Belongs to the isocitrate and isopropylmalate dehydrogenases family. Homodimer. The cofactor is Mg(2+). It depends on Mn(2+) as a cofactor.

The enzyme catalyses (2R,3S)-3-isopropylmalate + NAD(+) = 4-methyl-2-oxopentanoate + CO2 + NADH. It participates in antifungal biosynthesis. Functionally, isopropyl malate dehydrogenase; part of the gene cluster that mediates the de novo generation of L-homotyrosine from acetyl-CoA and 4-hydroxyphenyl-pyruvate. L-homotyrosine is a building block of echinocandin B, a fungal lipidated cyclic hexapeptide that acts as an antifungal agent. L-homotyrosine 4-hydroxyphenyl-pyruvate first undergoes an aldol-type condensation by htyA with the C-2 of acetyl-CoA followed by the release of CoA to form 2-(4-hydroxybenzyl)-malate. This is followed by isomerization of 2-(4-hydroxy-benzyl)-malate to 3-(4-hydroxybenzyl)-malate by htyD. Thereafter, 3-(4-hydroxybenzyl)-malate undergoes decarboxylation and oxidation to form 2-oxo-4-(4-hydroxybenzyl)butanoic acid, coupled to reduction of NAD(+) to NADH by htyC. The product then undergoes transamination catalyzed by htyB to form L-homotyrosine. This chain is Isopropyl malate dehydrogenase htyC, found in Aspergillus rugulosus (Emericella rugulosa).